A 230-amino-acid chain; its full sequence is Heptaprenylglyceryl phosphate synthase (230 aa).

Sn-glycerol 1-phosphate is bound at residue Lys12. Mg(2+) contacts are provided by Asp14 and Thr40. Residues 159–164 (YIEYSG), Gly189, and 209–210 (GD) contribute to the sn-glycerol 1-phosphate site.

This sequence belongs to the GGGP/HepGP synthase family. Group I subfamily. In terms of assembly, homodimer. Requires Mg(2+) as cofactor.

The catalysed reaction is sn-glycerol 1-phosphate + all-trans-heptaprenyl diphosphate = 3-heptaprenyl-sn-glycero-1-phosphate + diphosphate. It participates in membrane lipid metabolism; glycerophospholipid metabolism. Its function is as follows. Prenyltransferase that catalyzes in vivo the transfer of the heptaprenyl moiety of heptaprenyl pyrophosphate (HepPP; 35 carbon atoms) to the C3 hydroxyl of sn-glycerol-1-phosphate (G1P), producing heptaprenylglyceryl phosphate (HepGP). This reaction is an ether-bond-formation step in the biosynthesis of archaea-type G1P-based membrane lipids found in Bacillales. This is Heptaprenylglyceryl phosphate synthase from Staphylococcus aureus (strain bovine RF122 / ET3-1).